Here is a 414-residue protein sequence, read N- to C-terminus: S-adenosylmethionine synthase (414 aa).

His-11 contributes to the ATP binding site. Asp-13 serves as a coordination point for Mg(2+). Residue Glu-39 participates in K(+) binding. 2 residues coordinate L-methionine: Glu-52 and Gln-95. The segment at 95-105 (QSPDIAQGVNM) is flexible loop. Residues 169 to 171 (DGK), 245 to 246 (KF), Asp-254, 260 to 261 (RK), Ala-277, and Lys-281 each bind ATP. Asp-254 is an L-methionine binding site. Lys-285 lines the L-methionine pocket.

It belongs to the AdoMet synthase family. Homotetramer; dimer of dimers. It depends on Mg(2+) as a cofactor. K(+) is required as a cofactor.

The protein resides in the cytoplasm. The enzyme catalyses L-methionine + ATP + H2O = S-adenosyl-L-methionine + phosphate + diphosphate. Its pathway is amino-acid biosynthesis; S-adenosyl-L-methionine biosynthesis; S-adenosyl-L-methionine from L-methionine: step 1/1. In terms of biological role, catalyzes the formation of S-adenosylmethionine (AdoMet) from methionine and ATP. The overall synthetic reaction is composed of two sequential steps, AdoMet formation and the subsequent tripolyphosphate hydrolysis which occurs prior to release of AdoMet from the enzyme. The polypeptide is S-adenosylmethionine synthase (Synechococcus sp. (strain JA-2-3B'a(2-13)) (Cyanobacteria bacterium Yellowstone B-Prime)).